Here is a 1338-residue protein sequence, read N- to C-terminus: P-type sodium-transporting ATPase4 (1338 aa).

The disordered stretch occupies residues 1 to 106 (MAARASADKL…KSISSVSQMH (106 aa)). Positions 55–69 (AEEKVAGHDGESPRR) are enriched in basic and acidic residues. Over residues 91–104 (GHSQLGKSISSVSQ) the composition is skewed to polar residues. 8 helical membrane-spanning segments follow: residues 229 to 249 (IFIQ…AIAS), 255 to 275 (WVEG…ATYM), 418 to 438 (LGGM…VVAI), 456 to 476 (IVLV…PMVV), 985 to 1005 (FVCF…IAIA), 1068 to 1088 (IFEA…CTGV), 1261 to 1281 (MHLA…VPGI), and 1288 to 1308 (CALP…NLIL).

It belongs to the cation transport ATPase (P-type) (TC 3.A.3) family.

The protein localises to the cell membrane. The catalysed reaction is Na(+)(in) + ATP + H2O = Na(+)(out) + ADP + phosphate + H(+). With respect to regulation, inhibited by cipargamin, a synthetic spiroindolone. Inhibited by pyrazoleamide PA21A050, structurally unrelated to the spiroindolones. Inhibited by (+)-SJ733, a dihydroisoquinolone compound. Functionally, sodium-exporting ATPase. Required for the extrusion of Na(+) from the parasites to maintain a low cytosolic concentration of Na(+). Required for maintaining the viability of extracellular parasites but not for intracellular growth, egress or invasion. Involved in parasite virulence. The polypeptide is P-type sodium-transporting ATPase4 (Toxoplasma gondii (strain ATCC 50861 / VEG)).